Reading from the N-terminus, the 233-residue chain is Cytidylate kinase (233 aa).

15–23 (GPSGAGKST) contacts ATP. Basic and acidic residues predominate over residues 183–201 (RRDEQDSGREHAPLRRADD). A disordered region spans residues 183-202 (RRDEQDSGREHAPLRRADDA).

This sequence belongs to the cytidylate kinase family. Type 1 subfamily.

The protein localises to the cytoplasm. The enzyme catalyses CMP + ATP = CDP + ADP. The catalysed reaction is dCMP + ATP = dCDP + ADP. The sequence is that of Cytidylate kinase from Geobacter sulfurreducens (strain ATCC 51573 / DSM 12127 / PCA).